A 214-amino-acid chain; its full sequence is MKFFLDTANVEAIRAINELGVVDGVTTNPSIISREGRDFETVIKEICEIVDGPISAEVTGLTAEEMIAEARSIAKWHDNVVVKIPMTTEGLKATNVLSQEGIKTNVTLIFTVSQGLMAMKAGATYISPFIGRLEDIGADPYQLISDLRGIIDLYGFQAEIIAASIRTAAHVEAVAQLGAHIATIPDPLFAKMTEHPLTTNGLKTFMEDWASFKQ.

Lys-83 functions as the Schiff-base intermediate with substrate in the catalytic mechanism.

It belongs to the transaldolase family. Type 3B subfamily.

The protein localises to the cytoplasm. It carries out the reaction D-sedoheptulose 7-phosphate + D-glyceraldehyde 3-phosphate = D-erythrose 4-phosphate + beta-D-fructose 6-phosphate. It participates in carbohydrate degradation; pentose phosphate pathway; D-glyceraldehyde 3-phosphate and beta-D-fructose 6-phosphate from D-ribose 5-phosphate and D-xylulose 5-phosphate (non-oxidative stage): step 2/3. Functionally, transaldolase is important for the balance of metabolites in the pentose-phosphate pathway. This chain is Probable transaldolase, found in Streptococcus equi subsp. zooepidemicus (strain H70).